Consider the following 410-residue polypeptide: ATP phosphoribosyltransferase regulatory subunit (410 aa).

It belongs to the class-II aminoacyl-tRNA synthetase family. HisZ subfamily. As to quaternary structure, heteromultimer composed of HisG and HisZ subunits.

It is found in the cytoplasm. It participates in amino-acid biosynthesis; L-histidine biosynthesis; L-histidine from 5-phospho-alpha-D-ribose 1-diphosphate: step 1/9. Required for the first step of histidine biosynthesis. May allow the feedback regulation of ATP phosphoribosyltransferase activity by histidine. The protein is ATP phosphoribosyltransferase regulatory subunit of Synechococcus sp. (strain JA-3-3Ab) (Cyanobacteria bacterium Yellowstone A-Prime).